The following is a 258-amino-acid chain: Imidazole glycerol phosphate synthase subunit HisF (258 aa).

Catalysis depends on residues D11 and D130.

This sequence belongs to the HisA/HisF family. In terms of assembly, heterodimer of HisH and HisF.

Its subcellular location is the cytoplasm. It carries out the reaction 5-[(5-phospho-1-deoxy-D-ribulos-1-ylimino)methylamino]-1-(5-phospho-beta-D-ribosyl)imidazole-4-carboxamide + L-glutamine = D-erythro-1-(imidazol-4-yl)glycerol 3-phosphate + 5-amino-1-(5-phospho-beta-D-ribosyl)imidazole-4-carboxamide + L-glutamate + H(+). The protein operates within amino-acid biosynthesis; L-histidine biosynthesis; L-histidine from 5-phospho-alpha-D-ribose 1-diphosphate: step 5/9. Functionally, IGPS catalyzes the conversion of PRFAR and glutamine to IGP, AICAR and glutamate. The HisF subunit catalyzes the cyclization activity that produces IGP and AICAR from PRFAR using the ammonia provided by the HisH subunit. The sequence is that of Imidazole glycerol phosphate synthase subunit HisF from Rhodospirillum centenum (strain ATCC 51521 / SW).